The primary structure comprises 103 residues: Large ribosomal subunit protein bL21 (103 aa).

Belongs to the bacterial ribosomal protein bL21 family. Part of the 50S ribosomal subunit. Contacts protein L20.

This protein binds to 23S rRNA in the presence of protein L20. In Shigella sonnei (strain Ss046), this protein is Large ribosomal subunit protein bL21.